Reading from the N-terminus, the 425-residue chain is Trigger factor (425 aa).

A PPIase FKBP-type domain is found at G163–P248.

Belongs to the FKBP-type PPIase family. Tig subfamily.

It is found in the cytoplasm. It catalyses the reaction [protein]-peptidylproline (omega=180) = [protein]-peptidylproline (omega=0). Functionally, involved in protein export. Acts as a chaperone by maintaining the newly synthesized protein in an open conformation. Functions as a peptidyl-prolyl cis-trans isomerase. The protein is Trigger factor of Bacillus anthracis (strain A0248).